We begin with the raw amino-acid sequence, 591 residues long: Mono(ADP-ribosyl)transferase SpvB (591 aa).

The TR mART core domain maps to 373–576 (PMMGGNSSRP…LRLSDDATAD (204 aa)). Residues Arg-414 and 471–477 (RGLKLDK) contribute to the NAD(+) site. Active-site residues include Arg-471, Ser-501, and Glu-538. Glu-538 is an NAD(+) binding site.

This sequence belongs to the SpvB family.

The protein resides in the secreted. It carries out the reaction L-arginyl-[protein] + NAD(+) = N(omega)-(ADP-D-ribosyl)-L-arginyl-[protein] + nicotinamide + H(+). With respect to regulation, inhibited by novobiocin. Its function is as follows. Mono-ADP-ribosylates eukaryotic muscle and non-muscle actin on 'Arg-177'. ADP-ribosylates all actins tested, has more activity on nonmuscle beta/gamma-actin than on muscle alpha-actin. Prefers monomeric G-actin but can weakly ADP-ribosylate F-actin. ADP-ribosylation prevents the polymerization of G-actin to F-actin, causing actin filament depolymerization, destruction of the cytoskeleton and cytotoxicity. Does not possess NAD(+)-glycohydrolase activity, unlike most mART enzymes. In Salmonella typhimurium, this protein is Mono(ADP-ribosyl)transferase SpvB (spvB).